The following is a 314-amino-acid chain: Probable 5-dehydro-4-deoxyglucarate dehydratase (314 aa).

It belongs to the DapA family.

The enzyme catalyses 5-dehydro-4-deoxy-D-glucarate + H(+) = 2,5-dioxopentanoate + CO2 + H2O. Its pathway is carbohydrate acid metabolism; D-glucarate degradation; 2,5-dioxopentanoate from D-glucarate: step 2/2. This chain is Probable 5-dehydro-4-deoxyglucarate dehydratase, found in Bradyrhizobium diazoefficiens (strain JCM 10833 / BCRC 13528 / IAM 13628 / NBRC 14792 / USDA 110).